Consider the following 460-residue polypeptide: Argininosuccinate lyase (460 aa).

The protein belongs to the lyase 1 family. Argininosuccinate lyase subfamily.

The protein localises to the cytoplasm. The enzyme catalyses 2-(N(omega)-L-arginino)succinate = fumarate + L-arginine. It participates in amino-acid biosynthesis; L-arginine biosynthesis; L-arginine from L-ornithine and carbamoyl phosphate: step 3/3. This is Argininosuccinate lyase from Nitratidesulfovibrio vulgaris (strain DSM 19637 / Miyazaki F) (Desulfovibrio vulgaris).